Reading from the N-terminus, the 778-residue chain is Ent-sandaracopimaradiene synthase KSL3, chloroplastic (778 aa).

Residues 1-35 constitute a chloroplast transit peptide; that stretch reads MLLTSTNTLKISSQRKEWEAKDLTGMFHGQVNGRV. Aspartate 527, glutamate 531, asparagine 670, aspartate 671, and aspartate 678 together coordinate Mg(2+). The DDXXD motif motif lies at 527 to 531; that stretch reads DDFFE.

The protein belongs to the terpene synthase family. It depends on Mg(2+) as a cofactor.

It localises to the plastid. It is found in the chloroplast. The catalysed reaction is ent-copalyl diphosphate = ent-sandaracopimara-8(14),15-diene + diphosphate. The enzyme catalyses ent-copalyl diphosphate = ent-(12E)-labda-8(17),12,14-triene + diphosphate. It participates in secondary metabolite biosynthesis; terpenoid biosynthesis. Diterpene cyclase involved in the biosynthesis of labdane-related diterpenoids (LRDs) natural products. Catalyzes the cyclization of ent-CDP into ent-sandaracopimaradiene as a major, and ent-pimaradiene and ent-labdatriene as minor products. The protein is Ent-sandaracopimaradiene synthase KSL3, chloroplastic of Ricinus communis (Castor bean).